The following is a 440-amino-acid chain: tRNA modification GTPase MnmE (440 aa).

Arg23, Glu80, and Lys120 together coordinate (6S)-5-formyl-5,6,7,8-tetrahydrofolate. A TrmE-type G domain is found at 217-366 (GLKIVIAGEP…LLAMLQAHLP (150 aa)). Asn227 is a binding site for K(+). GTP is bound by residues 227-232 (NAGKSS), 246-252 (TEIAGTT), and 271-274 (DTAG). Residue Ser231 participates in Mg(2+) binding. K(+) contacts are provided by Thr246, Ile248, and Thr251. A Mg(2+)-binding site is contributed by Thr252. Residue Lys440 coordinates (6S)-5-formyl-5,6,7,8-tetrahydrofolate.

This sequence belongs to the TRAFAC class TrmE-Era-EngA-EngB-Septin-like GTPase superfamily. TrmE GTPase family. As to quaternary structure, homodimer. Heterotetramer of two MnmE and two MnmG subunits. K(+) serves as cofactor.

The protein localises to the cytoplasm. Functionally, exhibits a very high intrinsic GTPase hydrolysis rate. Involved in the addition of a carboxymethylaminomethyl (cmnm) group at the wobble position (U34) of certain tRNAs, forming tRNA-cmnm(5)s(2)U34. This chain is tRNA modification GTPase MnmE, found in Sinorhizobium medicae (strain WSM419) (Ensifer medicae).